Consider the following 82-residue polypeptide: ATP synthase subunit c (82 aa).

A run of 2 helical transmembrane segments spans residues Ala-6–Ile-26 and Leu-57–Ala-77.

The protein belongs to the ATPase C chain family. As to quaternary structure, F-type ATPases have 2 components, F(1) - the catalytic core - and F(0) - the membrane proton channel. F(1) has five subunits: alpha(3), beta(3), gamma(1), delta(1), epsilon(1). F(0) has four main subunits: a(1), b(1), b'(1) and c(10-14). The alpha and beta chains form an alternating ring which encloses part of the gamma chain. F(1) is attached to F(0) by a central stalk formed by the gamma and epsilon chains, while a peripheral stalk is formed by the delta, b and b' chains.

Its subcellular location is the cell inner membrane. Its function is as follows. F(1)F(0) ATP synthase produces ATP from ADP in the presence of a proton or sodium gradient. F-type ATPases consist of two structural domains, F(1) containing the extramembraneous catalytic core and F(0) containing the membrane proton channel, linked together by a central stalk and a peripheral stalk. During catalysis, ATP synthesis in the catalytic domain of F(1) is coupled via a rotary mechanism of the central stalk subunits to proton translocation. Functionally, key component of the F(0) channel; it plays a direct role in translocation across the membrane. A homomeric c-ring of between 10-14 subunits forms the central stalk rotor element with the F(1) delta and epsilon subunits. This Gloeobacter violaceus (strain ATCC 29082 / PCC 7421) protein is ATP synthase subunit c.